We begin with the raw amino-acid sequence, 124 residues long: MRHYEIVFIVHPDQSEQVPAMIDRYKATLAAVGGKIHRMEDWGRRQMAYMIDKLAKAHYVCMNIECDQKTLEELEHAFKFNDAVLRHLIIKTKKAETEPSIMMKEVQHEEARKSAQSDAPVAAA.

Basic and acidic residues predominate over residues 105–115 (EVQHEEARKSA). The segment at 105–124 (EVQHEEARKSAQSDAPVAAA) is disordered.

Belongs to the bacterial ribosomal protein bS6 family.

In terms of biological role, binds together with bS18 to 16S ribosomal RNA. The protein is Small ribosomal subunit protein bS6 of Polynucleobacter necessarius subsp. necessarius (strain STIR1).